The chain runs to 311 residues: Malate dehydrogenase (311 aa).

10–15 (GAGHTG) lines the NAD(+) pocket. Residues R85 and R91 each contribute to the substrate site. Residues N98 and 121–123 (LTN) each bind NAD(+). Substrate-binding residues include N123 and R154. H178 (proton acceptor) is an active-site residue.

This sequence belongs to the LDH/MDH superfamily. MDH type 3 family.

The enzyme catalyses (S)-malate + NAD(+) = oxaloacetate + NADH + H(+). Functionally, catalyzes the reversible oxidation of malate to oxaloacetate. This Staphylococcus carnosus (strain TM300) protein is Malate dehydrogenase.